An 83-amino-acid polypeptide reads, in one-letter code: Small ribosomal subunit protein bS16 (83 aa).

This sequence belongs to the bacterial ribosomal protein bS16 family.

The protein is Small ribosomal subunit protein bS16 of Borrelia hermsii (strain HS1 / DAH).